The sequence spans 779 residues: Catalase-peroxidase (779 aa).

Residues 148–270 constitute a cross-link (tryptophyl-tyrosyl-methioninium (Trp-Tyr) (with M-296)); it reads WHSAGTYRIT…LGAVQMGLIY (123 aa). The Proton acceptor role is filled by H149. Residues 270–296 constitute a cross-link (tryptophyl-tyrosyl-methioninium (Tyr-Met) (with W-148)); it reads YVNPEGPNGKPDPIAAAKDIRETFFRM. H311 provides a ligand contact to heme b.

The protein belongs to the peroxidase family. Peroxidase/catalase subfamily. As to quaternary structure, homodimer or homotetramer. The cofactor is heme b. In terms of processing, formation of the three residue Trp-Tyr-Met cross-link is important for the catalase, but not the peroxidase activity of the enzyme.

It carries out the reaction H2O2 + AH2 = A + 2 H2O. The catalysed reaction is 2 H2O2 = O2 + 2 H2O. In terms of biological role, bifunctional enzyme with both catalase and broad-spectrum peroxidase activity. The sequence is that of Catalase-peroxidase from Bradyrhizobium diazoefficiens (strain JCM 10833 / BCRC 13528 / IAM 13628 / NBRC 14792 / USDA 110).